The following is a 429-amino-acid chain: Trigger factor (429 aa).

Positions 163-248 constitute a PPIase FKBP-type domain; the sequence is GDFVVIDFVG…IKEIKVKETP (86 aa).

The protein belongs to the FKBP-type PPIase family. Tig subfamily.

It localises to the cytoplasm. It catalyses the reaction [protein]-peptidylproline (omega=180) = [protein]-peptidylproline (omega=0). Its function is as follows. Involved in protein export. Acts as a chaperone by maintaining the newly synthesized protein in an open conformation. Functions as a peptidyl-prolyl cis-trans isomerase. The protein is Trigger factor of Halothermothrix orenii (strain H 168 / OCM 544 / DSM 9562).